The following is a 225-amino-acid chain: UPF0758 protein MADE_1000235 (225 aa).

The region spanning V102 to L224 is the MPN domain. Residues H173, H175, and D186 each coordinate Zn(2+). Residues H173 to D186 carry the JAMM motif motif.

The protein belongs to the UPF0758 family.

In Alteromonas mediterranea (strain DSM 17117 / CIP 110805 / LMG 28347 / Deep ecotype), this protein is UPF0758 protein MADE_1000235.